Reading from the N-terminus, the 944-residue chain is ATP-dependent RNA helicase DDX42 (944 aa).

The span at 1-18 (MNWNKGGPGTKRGFGFGG) shows a compositional bias: gly residues. Disordered regions lie at residues 1 to 119 (MNWN…LEAF), 131 to 155 (MKRLEDKDKEKKNAKGIRDDIEEED), and 182 to 203 (EYDSDGNPIAPSKKIIDPLPPI). Low complexity predominate over residues 35–52 (SHSAFGTAGSSAAFAKSG). The segment covering 70–84 (DEENAYFEDEEEDNS) has biased composition (acidic residues). Positions 120–157 (MAEVEDQAARDMKRLEDKDKEKKNAKGIRDDIEEEDDQ) form a coiled coil. A compositionally biased stretch (basic and acidic residues) spans 131 to 149 (MKRLEDKDKEKKNAKGIRD). The Q motif motif lies at 253-281 (SSFARFGFDEQLMHQIRKSEYTQPTPIQC). The 176-residue stretch at 284 to 459 (VPVAMSGRDM…RDILIDPIRV (176 aa)) folds into the Helicase ATP-binding domain. 297-304 (AKTGSGKT) provides a ligand contact to ATP. Positions 407–410 (DEAD) match the DEAD box motif. The region spanning 487 to 632 (WLTRRLVEFT…HVSKELLDLA (146 aa)) is the Helicase C-terminal domain. 3 disordered regions span residues 642–682 (RFKG…VMSN), 723–753 (GSSAAGASGWTSAGSLNSVPTSSAQQNAANP), and 794–944 (SANA…RWDS). The span at 723 to 737 (GSSAAGASGWTSAGS) shows a compositional bias: low complexity. Residues 738–752 (LNSVPTSSAQQNAAN) are compositionally biased toward polar residues. The span at 794 to 814 (SANASAGNREGVGSAGSAPRG) shows a compositional bias: low complexity. A compositionally biased stretch (gly residues) spans 815–824 (GSSGGGGGGI). Basic and acidic residues-rich tracts occupy residues 825–887 (VRER…RHFT) and 901–926 (NISEGRSNESRNGENRKDANSRDNKT).

It belongs to the DEAD box helicase family. DDX42 subfamily. In terms of assembly, transient component of the SF3B subcomplex of the 17S U2 SnRNP complex.

The protein localises to the cytoplasm. It localises to the nucleus. It carries out the reaction ATP + H2O = ADP + phosphate + H(+). ATP-dependent RNA helicase that binds to partially double-stranded RNAs (dsRNAs) in order to unwind RNA secondary structures. Unwinding is promoted in the presence of single-strand binding proteins. Also mediates RNA duplex formation thereby displacing the single-strand RNA binding protein. ATP and ADP modulate its activity: ATP binding and hydrolysis by DDX42 triggers RNA strand separation, whereas the ADP-bound form of the protein triggers annealing of complementary RNA strands. Required for assembly of the 17S U2 SnRNP complex of the spliceosome, a large ribonucleoprotein complex that removes introns from transcribed pre-mRNAs: DDX42 associates transiently with the SF3B subcomplex of the 17S U2 SnRNP complex and is released after fulfilling its role in the assembly of 17S U2 SnRNP. In Gallus gallus (Chicken), this protein is ATP-dependent RNA helicase DDX42 (DDX42).